The chain runs to 693 residues: Elongation factor G (693 aa).

Residues 7–282 (EKIRNIGITA…SVIDYLPAPT (276 aa)) enclose the tr-type G domain. Residues 16–23 (AHIDAGKT), 80–84 (DTPGH), and 134–137 (NKLD) each bind GTP.

This sequence belongs to the TRAFAC class translation factor GTPase superfamily. Classic translation factor GTPase family. EF-G/EF-2 subfamily.

It localises to the cytoplasm. Its function is as follows. Catalyzes the GTP-dependent ribosomal translocation step during translation elongation. During this step, the ribosome changes from the pre-translocational (PRE) to the post-translocational (POST) state as the newly formed A-site-bound peptidyl-tRNA and P-site-bound deacylated tRNA move to the P and E sites, respectively. Catalyzes the coordinated movement of the two tRNA molecules, the mRNA and conformational changes in the ribosome. This Granulibacter bethesdensis (strain ATCC BAA-1260 / CGDNIH1) protein is Elongation factor G.